We begin with the raw amino-acid sequence, 256 residues long: L-tyrosine degradation gene cluster protein hmgX (256 aa).

This sequence belongs to the TTC36 family.

The protein resides in the cytoplasm. Its function is as follows. Part of the L-tyrosine degradation gene cluster that mediates the biosynthesis of the brownish pigment pyomelanin as an alternative melanin. The 4-hydroxyphenylpyruvate dioxygenase hppD catalyzes the conversion of 4-hydroxyphenylpyruvate to homogentisic acid (HGA). The protein hmgX is crucial for this conversion and thus, probably functions as an accessory factor to mediate specific activity of hppD. The homogentisate 1,2-dioxygenase hmgA is then involved in the cleavage of the aromatic ring of HGA and its conversion to 4-maleylacetoacetate. When hmgA activity is lowered by the cell wall integrity (CWI) signaling pathway, HGA accumulates and leads to the production of pyomelanin through benzoquinone acetic acid after oxidation and polymerization. On the opposite, in non-stress conditions, both hppD and hmgA activities are balanced and HGA is degraded into 4-maleylacetoacetate. 4-maleylacetoacetate is further converted to 4-fumarylacetoacetate by the maleylacetoacetate isomerase maiA, which is degraded into fumarate and acetoacetate by the fumarylacetoacetase fahA. The sequence is that of L-tyrosine degradation gene cluster protein hmgX from Aspergillus fumigatus (strain ATCC MYA-4609 / CBS 101355 / FGSC A1100 / Af293) (Neosartorya fumigata).